Reading from the N-terminus, the 652-residue chain is Protein high chlorophyll fluorescent 107 (652 aa).

Disordered regions lie at residues 1-21 (MHFFFVPNSSSSSPSPANTSS) and 78-121 (VFSP…EGKK). The N-terminal 68 residues, 1–68 (MHFFFVPNSS…TFSSKNTYLY (68 aa)), are a transit peptide targeting the chloroplast. Residues 105 to 121 (PLLENSDKESSEEEGKK) show a composition bias toward basic and acidic residues. TPR repeat units follow at residues 168–201 (LDLSLYKAKVLARNFRYKDAEKILEKCIAYWPED), 202–235 (GRPYVALGKILSKQSKLAEARILYEKGCQSTQGE), 237–270 (SYIWQCWAVLENRLGNVRRARELFDAATVADKKH), 271–304 (VAAWHGWANLEIKQGNISKARNLLAKGLKFCGRN), 305–338 (EYIYQTLALLEAKAGRYEQARYLFKQATICNSRS), 339–372 (CASWLAWAQLEIQQERYPAARKLFEKAVQASPKN), 374–406 (FAWHVWGVFEAGVGNVERGRKLLKIGHALNPRD), 407–440 (PVLLQSLGLLEYKHSSANLARALLRRASELDPRH), 441–474 (QPVWIAWGWMEWKEGNTTTARELYQRALSIDANT), 478–511 (SRCLQAWGVLEQRAGNLSAARRLFRSSLNINSQS), 543–576 (TEVVDDASWVTGFLDIIDPALDTVKRLLNFGQNN), and 598–631 (QQPESSAGREDIETGSGFNLDVFLRSKLSLDPLK). The disordered stretch occupies residues 585-610 (LRNMNRTKDSQSNQQPESSAGREDIE).

May form homomultimers. Part of a multi-subunit complex in the range of 60-190 and 600-800 kDa in chloroplast membranes.

It localises to the plastid. It is found in the chloroplast. The protein localises to the chloroplast membrane. The protein resides in the chloroplast stroma. In terms of biological role, involved, directly or indirectly, in the processing of chloroplast encoded mRNAs. Exhibits sequence-specific RNA binding and RNA remodeling activities, probably leading to the activation of translation of the target gene cluster psbB-psbT-psbH-petB-petD. Blocks 5'-3' and 3'-5' exoribonucleases (e.g. polynucleotide phosphorylase (PNPase), RNase R) in vitro. Necessary for intercistronic RNA processing of the psbH 5' untranslated region or the stabilization of 5' processed psbH RNAs. Also required for the synthesis of psbB. This Arabidopsis thaliana (Mouse-ear cress) protein is Protein high chlorophyll fluorescent 107.